The chain runs to 81 residues: Short neurotoxin B (81 aa).

The signal sequence occupies residues 1–21 (MKTLLLTLVVVTIVCLDLGYT). Cystine bridges form between cysteine 24/cysteine 43, cysteine 38/cysteine 60, cysteine 62/cysteine 73, and cysteine 74/cysteine 79.

The protein belongs to the three-finger toxin family. Short-chain subfamily. Type I alpha-neurotoxin sub-subfamily. Expressed by the venom gland.

The protein localises to the secreted. In terms of biological role, binds to muscle nicotinic acetylcholine receptor (nAChR) and inhibit acetylcholine from binding to the receptor, thereby impairing neuromuscular transmission. The chain is Short neurotoxin B from Aipysurus laevis (Olive sea snake).